A 533-amino-acid polypeptide reads, in one-letter code: MAVLSRMRLRWALLDTRVMGHGLCPQGARAKAAIPAALRDHESTEGPGTGQDRPRLRSLAELPGPGTLRFLFQLFLRGYVLHLHELQALNKAKYGPMWTTTFGTRTNVNLASAPLLEQVMRQEGKYPIRDSMEQWKEHRDHKGLSYGIFITQGQQWYHLRHSLNQRMLKPAEAALYTDALNEVISDFIARLDQVRTESASGDQVPDVAHLLYHLALEAICYILFEKRVGCLEPSIPEDTATFIRSVGLMFKNSVYVTFLPKWSRPLLPFWKRYMNNWDNIFSFGEKMIHQKVQEIEAQLQAAGPDGVQVSGYLHFLLTKELLSPQETVGTFPELILAGVDTTSNTLTWALYHLSKNPEIQEALHKEVTGVVPFGKVPQNKDFAHMPLLKAVIKETLRLYPVVPTNSRIITEKETEINGFLFPKNTQFVLCHYVVSRDPSVFPEPESFQPHRWLRKREDDNSGIQHPFGSVPFGYGVRSCLGRRIAELEMQLLLSRLIQKYEVVLSPGMGEVKSVSRIVLVPSKKVSLRFLQRQ.

A mitochondrion-targeting transit peptide spans 1–32 (MAVLSRMRLRWALLDTRVMGHGLCPQGARAKA). Residues 38-58 (LRDHESTEGPGTGQDRPRLRS) form a disordered region. K142 and K375 each carry N6-acetyllysine. A sterol-binding region spans residues 386–400 (PLLKAVIKETLRLYP). C479 lines the heme pocket. Residues K512 and K523 each carry the N6-acetyllysine modification.

Belongs to the cytochrome P450 family. In terms of assembly, interacts with HSP70; this interaction is required for initial targeting to mitochondria. Heme serves as cofactor. Expressed in liver, kidney and ovary.

It localises to the mitochondrion inner membrane. It catalyses the reaction 5beta-cholestane-3alpha,7alpha,12alpha-triol + 6 reduced [adrenodoxin] + 3 O2 + 5 H(+) = (25R)-3alpha,7alpha,12alpha-trihydroxy-5beta-cholestan-26-oate + 6 oxidized [adrenodoxin] + 4 H2O. The catalysed reaction is cholestanol + 2 reduced [adrenodoxin] + O2 + 2 H(+) = (25R)-26-hydroxycholestanol + 2 oxidized [adrenodoxin] + H2O. The enzyme catalyses (25R)-3beta-hydroxycholest-5-en-7-one-26-al + 2 reduced [adrenodoxin] + O2 + H(+) = (25R)-3beta-hydroxycholest-5-en-7-one-26-oate + 2 oxidized [adrenodoxin] + H2O. It carries out the reaction (25R)-3beta,26-dihydroxycholest-5-en-7-one + 2 reduced [adrenodoxin] + O2 + 2 H(+) = (25R)-3beta-hydroxycholest-5-en-7-one-26-al + 2 oxidized [adrenodoxin] + 2 H2O. It catalyses the reaction 7-oxocholesterol + 2 reduced [adrenodoxin] + O2 + 2 H(+) = (25R)-3beta,26-dihydroxycholest-5-en-7-one + 2 oxidized [adrenodoxin] + H2O. The catalysed reaction is calciol + 2 reduced [adrenodoxin] + O2 + 2 H(+) = calcidiol + 2 oxidized [adrenodoxin] + H2O. The enzyme catalyses (25R)-5beta-cholestane-3alpha,7alpha,12alpha,26-tetrol + 2 reduced [adrenodoxin] + O2 + 2 H(+) = (25R)-3alpha,7alpha,12alpha-trihydroxy-5beta-cholestan-26-al + 2 oxidized [adrenodoxin] + 2 H2O. It carries out the reaction 2 reduced [adrenodoxin] + cholesterol + O2 + 2 H(+) = (25R)-cholest-5-ene-3beta,26-diol + 2 oxidized [adrenodoxin] + H2O. It catalyses the reaction (25R)-3beta,4beta-dihydroxycholest-5-en-26-al + 2 reduced [adrenodoxin] + O2 + H(+) = (25R)-3beta,4beta-dihydroxycholest-5-en-26-oate + 2 oxidized [adrenodoxin] + H2O. The catalysed reaction is (25R)-4beta,26-dihydroxycholesterol + 2 reduced [adrenodoxin] + O2 + 2 H(+) = (25R)-3beta,4beta-dihydroxycholest-5-en-26-al + 2 oxidized [adrenodoxin] + 2 H2O. The enzyme catalyses 4beta-hydroxycholesterol + 2 reduced [adrenodoxin] + O2 + 2 H(+) = (25R)-4beta,26-dihydroxycholesterol + 2 oxidized [adrenodoxin] + H2O. It carries out the reaction (25R)-3beta-hydroxy-5-cholesten-26-al + 2 reduced [adrenodoxin] + O2 + H(+) = (25R)-3beta-hydroxy-5-cholestenoate + 2 oxidized [adrenodoxin] + H2O. It catalyses the reaction (25R)-cholest-5-ene-3beta,26-diol + 2 reduced [adrenodoxin] + O2 + 2 H(+) = (25R)-3beta-hydroxy-5-cholesten-26-al + 2 oxidized [adrenodoxin] + 2 H2O. The catalysed reaction is (25R)-3alpha,7alpha,12alpha-trihydroxy-5beta-cholestan-26-al + 2 reduced [adrenodoxin] + O2 + H(+) = (25R)-3alpha,7alpha,12alpha-trihydroxy-5beta-cholestan-26-oate + 2 oxidized [adrenodoxin] + H2O. The enzyme catalyses 5beta-cholestane-3alpha,7alpha,12alpha-triol + 2 reduced [adrenodoxin] + O2 + 2 H(+) = (25R)-5beta-cholestane-3alpha,7alpha,12alpha,26-tetrol + 2 oxidized [adrenodoxin] + H2O. It participates in hormone biosynthesis; cholecalciferol biosynthesis. It functions in the pathway steroid metabolism; cholesterol degradation. The protein operates within lipid metabolism; bile acid biosynthesis. Cytochrome P450 monooxygenase that catalyzes regio- and stereospecific hydroxylation of cholesterol and its derivatives. Hydroxylates (with R stereochemistry) the terminal methyl group of cholesterol side-chain in a three step reaction to yield at first a C26 alcohol, then a C26 aldehyde and finally a C26 acid. Regulates cholesterol homeostasis by catalyzing the conversion of excess cholesterol to bile acids via both the 'neutral' (classic) and the 'acid' (alternative) pathways. May also regulate cholesterol homeostasis via generation of active oxysterols, which act as ligands for NR1H2 and NR1H3 nuclear receptors, modulating the transcription of genes involved in lipid metabolism. Plays a role in cholestanol metabolism in the cerebellum. Similarly to cholesterol, hydroxylates cholestanol and may facilitate sterol diffusion through the blood-brain barrier to the systemic circulation for further degradation. Also hydroxylates retinal 7-ketocholesterol, a noxious oxysterol with pro-inflammatory and pro-apoptotic effects, and may play a role in its elimination from the retinal pigment epithelium. May play a redundant role in vitamin D biosynthesis. Catalyzes 25-hydroxylation of vitamin D3 that is required for its conversion to a functionally active form. This chain is Sterol 26-hydroxylase, mitochondrial (Cyp27a1), found in Rattus norvegicus (Rat).